The sequence spans 273 residues: Epidermal growth factor-like protein 7 (273 aa).

An N-terminal signal peptide occupies residues 1 to 23 (MRGSQEVLLMWLLVLAVGGTEHA). Residues 27–104 (GRRVCAVRAH…TSGLPGACGA (78 aa)) enclose the EMI domain. Intrachain disulfides connect cysteine 31–cysteine 89, cysteine 56–cysteine 62, cysteine 88–cysteine 102, cysteine 107–cysteine 117, cysteine 111–cysteine 123, cysteine 125–cysteine 134, cysteine 141–cysteine 152, cysteine 148–cysteine 161, and cysteine 163–cysteine 176. Positions 103–135 (GAAICQPPCRNGGSCVQPGRCRCPAGWRGDTCQ) constitute an EGF-like 1 domain. The Cell attachment site motif lies at 130–132 (RGD). Residues 137-177 (DVDECSARRGGCPQRCVNTAGSYWCQCWEGHSLSADGTLCV) enclose the EGF-like 2; calcium-binding domain. Residues 192–219 (VDSAMKEEVQRLQSRVDLLEEKLQLVLA) are a coiled coil.

Interacts with ITGAV/ITGB3 in an RGD-dependent manner, increasing endothelial cell's motility.

Its subcellular location is the secreted. It localises to the extracellular space. Its function is as follows. Regulates vascular tubulogenesis in vivo. Inhibits platelet-derived growth factor (PDGF)-BB-induced smooth muscle cell migration and promotes endothelial cell adhesion to the extracellular matrix and angiogenesis. The polypeptide is Epidermal growth factor-like protein 7 (EGFL7) (Homo sapiens (Human)).